The following is a 147-amino-acid chain: Hemoglobin subunit deltaH (147 aa).

The Globin domain maps to 3 to 147; that stretch reads RLTDSEKAEV…MANALAHKYH (145 aa). Heme b is bound by residues histidine 64 and histidine 93.

It belongs to the globin family. In terms of assembly, heterotetramer of two delta chains and two alpha chains. Red blood cells.

The sequence is that of Hemoglobin subunit deltaH from Heterohyrax brucei (Yellow-spotted hyrax).